The following is a 351-amino-acid chain: UDP-N-acetylglucosamine--N-acetylmuramyl-(pentapeptide) pyrophosphoryl-undecaprenol N-acetylglucosamine transferase (351 aa).

UDP-N-acetyl-alpha-D-glucosamine-binding positions include 11 to 13 (TGG), asparagine 120, arginine 161, serine 187, and glutamine 281.

This sequence belongs to the glycosyltransferase 28 family. MurG subfamily.

The protein resides in the cell inner membrane. It carries out the reaction di-trans,octa-cis-undecaprenyl diphospho-N-acetyl-alpha-D-muramoyl-L-alanyl-D-glutamyl-meso-2,6-diaminopimeloyl-D-alanyl-D-alanine + UDP-N-acetyl-alpha-D-glucosamine = di-trans,octa-cis-undecaprenyl diphospho-[N-acetyl-alpha-D-glucosaminyl-(1-&gt;4)]-N-acetyl-alpha-D-muramoyl-L-alanyl-D-glutamyl-meso-2,6-diaminopimeloyl-D-alanyl-D-alanine + UDP + H(+). The protein operates within cell wall biogenesis; peptidoglycan biosynthesis. In terms of biological role, cell wall formation. Catalyzes the transfer of a GlcNAc subunit on undecaprenyl-pyrophosphoryl-MurNAc-pentapeptide (lipid intermediate I) to form undecaprenyl-pyrophosphoryl-MurNAc-(pentapeptide)GlcNAc (lipid intermediate II). The protein is UDP-N-acetylglucosamine--N-acetylmuramyl-(pentapeptide) pyrophosphoryl-undecaprenol N-acetylglucosamine transferase of Rippkaea orientalis (strain PCC 8801 / RF-1) (Cyanothece sp. (strain PCC 8801)).